The following is a 154-amino-acid chain: MKCPFCGHSNTQVLDTRMSEDGDAVRRRRRCEACDRRFTTYERIELFFPAIVKKNGSRVDYSRAKLKDSMRLALRKRPVSAEAIDEAITRIEEKLLALGQKEIPSSQVGELVMRELRKLDKIAYIRFASVYRSFEDVAEFSDVLAEVTSGNSKR.

A zinc finger lies at 3–34 (CPFCGHSNTQVLDTRMSEDGDAVRRRRRCEAC). Positions 49-139 (PAIVKKNGSR…VYRSFEDVAE (91 aa)) constitute an ATP-cone domain.

Belongs to the NrdR family. It depends on Zn(2+) as a cofactor.

Negatively regulates transcription of bacterial ribonucleotide reductase nrd genes and operons by binding to NrdR-boxes. This is Transcriptional repressor NrdR from Cupriavidus pinatubonensis (strain JMP 134 / LMG 1197) (Cupriavidus necator (strain JMP 134)).